The sequence spans 162 residues: Gas vesicle protein I (162 aa).

Residues 1-162 (MTGKQHQKHE…AERQRGGADE (162 aa)) form a disordered region. 2 stretches are compositionally biased toward basic and acidic residues: residues 22–37 (INRDKARSKLLRQREK) and 47–64 (RQSEVRRGNQSKAQHDTQ). Composition is skewed to polar residues over residues 65-74 (SETQRGTQSK) and 81-110 (TGGTKNPTAHSTLPPQKTNAENAVRNSHST). Basic and acidic residues-rich tracts occupy residues 122-142 (ARERLYGLRLHRETTASEDKS) and 151-162 (PKAERQRGGADE).

The protein belongs to the gas vesicle GvpI family. In terms of assembly, gvpF to GvpM interact with each other in vitro, and may form multi-subunit complex(es). Interacts with GvpC and GvpO.

The protein localises to the gas vesicle. Proteins GvpF to GvpM might be involved in nucleating gas vesicle formation. A minor component of the gas vesicle. Gas vesicles are hollow, gas filled proteinaceous nanostructures found in some microorganisms. They allow positioning of halobacteria at the optimal depth for growth in the poorly aerated, shallow brine pools of their habitat. In terms of biological role, expression of a 9.5 kb mc-vac DNA fragment containing 2 divergently transcribed regions (gvpD-gvpE-gvpF-gvpG-gvpH-gvpI-gvpJ-gvpK-gvpL-gvpM and gvpA-gvpC-gvpN-gvpO) allows H.volcanii to produce gas vesicles. The polypeptide is Gas vesicle protein I (Haloferax mediterranei (strain ATCC 33500 / DSM 1411 / JCM 8866 / NBRC 14739 / NCIMB 2177 / R-4) (Halobacterium mediterranei)).